A 159-amino-acid chain; its full sequence is uncharacterized protein (159 aa).

Residues 1–139 (MNIIPTCQVP…TARKMKPEIP (139 aa)) form the N-acetyltransferase domain.

This is an uncharacterized protein from Bacillus subtilis (strain 168).